A 93-amino-acid polypeptide reads, in one-letter code: Pyrimidine/purine nucleoside phosphorylase (93 aa).

Belongs to the nucleoside phosphorylase PpnP family.

The enzyme catalyses a purine D-ribonucleoside + phosphate = a purine nucleobase + alpha-D-ribose 1-phosphate. It catalyses the reaction adenosine + phosphate = alpha-D-ribose 1-phosphate + adenine. The catalysed reaction is cytidine + phosphate = cytosine + alpha-D-ribose 1-phosphate. It carries out the reaction guanosine + phosphate = alpha-D-ribose 1-phosphate + guanine. The enzyme catalyses inosine + phosphate = alpha-D-ribose 1-phosphate + hypoxanthine. It catalyses the reaction thymidine + phosphate = 2-deoxy-alpha-D-ribose 1-phosphate + thymine. The catalysed reaction is uridine + phosphate = alpha-D-ribose 1-phosphate + uracil. It carries out the reaction xanthosine + phosphate = alpha-D-ribose 1-phosphate + xanthine. Its function is as follows. Catalyzes the phosphorolysis of diverse nucleosides, yielding D-ribose 1-phosphate and the respective free bases. Can use uridine, adenosine, guanosine, cytidine, thymidine, inosine and xanthosine as substrates. Also catalyzes the reverse reactions. The sequence is that of Pyrimidine/purine nucleoside phosphorylase from Shewanella pealeana (strain ATCC 700345 / ANG-SQ1).